A 145-amino-acid polypeptide reads, in one-letter code: Protein SPMIP3 (145 aa).

This Mus musculus (Mouse) protein is Protein SPMIP3.